Here is an 869-residue protein sequence, read N- to C-terminus: Leucine--tRNA ligase (869 aa).

Residues 51–61 (PYPSGRIHMGH) carry the 'HIGH' region motif. The 'KMSKS' region signature appears at 636–640 (KMSKS). Lysine 639 serves as a coordination point for ATP.

This sequence belongs to the class-I aminoacyl-tRNA synthetase family.

Its subcellular location is the cytoplasm. The enzyme catalyses tRNA(Leu) + L-leucine + ATP = L-leucyl-tRNA(Leu) + AMP + diphosphate. The sequence is that of Leucine--tRNA ligase from Dinoroseobacter shibae (strain DSM 16493 / NCIMB 14021 / DFL 12).